Consider the following 652-residue polypeptide: DNA ligase (652 aa).

NAD(+)-binding positions include 29–33 (DAEYD), 78–79 (SL), and Glu-107. Lys-109 (N6-AMP-lysine intermediate) is an active-site residue. 4 residues coordinate NAD(+): Arg-130, Glu-164, Lys-278, and Lys-302. Residues Cys-395, Cys-398, Cys-413, and Cys-418 each contribute to the Zn(2+) site. The region spanning 577–652 (TDDAILSGKT…VKDEAWLLDL (76 aa)) is the BRCT domain.

The protein belongs to the NAD-dependent DNA ligase family. LigA subfamily. It depends on Mg(2+) as a cofactor. Requires Mn(2+) as cofactor.

The catalysed reaction is NAD(+) + (deoxyribonucleotide)n-3'-hydroxyl + 5'-phospho-(deoxyribonucleotide)m = (deoxyribonucleotide)n+m + AMP + beta-nicotinamide D-nucleotide.. Functionally, DNA ligase that catalyzes the formation of phosphodiester linkages between 5'-phosphoryl and 3'-hydroxyl groups in double-stranded DNA using NAD as a coenzyme and as the energy source for the reaction. It is essential for DNA replication and repair of damaged DNA. This chain is DNA ligase, found in Streptococcus thermophilus (strain ATCC BAA-491 / LMD-9).